Reading from the N-terminus, the 817-residue chain is Sorting nexin-29 (817 aa).

The region spanning 37–181 is the RUN domain; sequence SDSDSRVTCL…ILFAINIDNK (145 aa). A phosphoserine mark is found at Ser269, Ser292, Ser293, Ser331, and Ser345. Residues 271 to 299 form a disordered region; that stretch reads DDEEDEQSSGDVFKKIPGAGESSEENSDR. Disordered stretches follow at residues 344–381 and 417–460; these read KSIDDEDADENEDDVCGSMPGRKRPGHSESPEKPLDAG and APLG…LPSA. Residues 347-358 show a composition bias toward acidic residues; it reads DDEDADENEDDV. Residues 369 to 378 are compositionally biased toward basic and acidic residues; sequence GHSESPEKPL. Low complexity predominate over residues 445 to 460; sequence SPPGQESPLSSLLPSA. Ser451 is subject to Phosphoserine. Residues 466-546 are a coiled coil; the sequence is MTVSDLRQAI…VLKVQLKKYV (81 aa). Phosphoserine is present on Ser641. A Phosphothreonine modification is found at Thr643. Ser644 and Ser648 each carry phosphoserine. The PX domain occupies 658 to 781; it reads ALINVWIPSV…PFFVDITPPG (124 aa). Positions 784–817 are disordered; it reads LTKNSRPKVASRFPKLARGHPRETRNVEPQSGDL.

This sequence belongs to the sorting nexin family.

This Bos taurus (Bovine) protein is Sorting nexin-29 (SNX29).